Consider the following 227-residue polypeptide: ATP-dependent Clp protease proteolytic subunit (227 aa).

Serine 120 (nucleophile) is an active-site residue. Residue histidine 145 is part of the active site.

Belongs to the peptidase S14 family. Fourteen ClpP subunits assemble into 2 heptameric rings which stack back to back to give a disk-like structure with a central cavity, resembling the structure of eukaryotic proteasomes.

It localises to the cytoplasm. It carries out the reaction Hydrolysis of proteins to small peptides in the presence of ATP and magnesium. alpha-casein is the usual test substrate. In the absence of ATP, only oligopeptides shorter than five residues are hydrolyzed (such as succinyl-Leu-Tyr-|-NHMec, and Leu-Tyr-Leu-|-Tyr-Trp, in which cleavage of the -Tyr-|-Leu- and -Tyr-|-Trp bonds also occurs).. Its function is as follows. Cleaves peptides in various proteins in a process that requires ATP hydrolysis. Has a chymotrypsin-like activity. Plays a major role in the degradation of misfolded proteins. The polypeptide is ATP-dependent Clp protease proteolytic subunit (Rickettsia bellii (strain RML369-C)).